The primary structure comprises 322 residues: Thioredoxin reductase (322 aa).

FAD-binding positions include 12 to 15 (SGPA), 34 to 42 (EGAVTAGGA), asparagine 51, and valine 84. A disulfide bridge links cysteine 136 with cysteine 139. Residues histidine 176, arginine 182, isoleucine 239, and tyrosine 259 each contribute to the NADP(+) site. FAD-binding positions include aspartate 279 and 286–289 (RQAI). Arginine 286 contributes to the NADP(+) binding site.

Belongs to the class-II pyridine nucleotide-disulfide oxidoreductase family. As to quaternary structure, homodimer. FAD serves as cofactor.

It is found in the cytoplasm. The catalysed reaction is [thioredoxin]-dithiol + NADP(+) = [thioredoxin]-disulfide + NADPH + H(+). This Streptomyces coelicolor (strain ATCC BAA-471 / A3(2) / M145) protein is Thioredoxin reductase.